The chain runs to 353 residues: Photosystem II protein D1 (353 aa).

Thr2 is subject to N-acetylthreonine. Thr2 is subject to Phosphothreonine. The next 3 helical transmembrane spans lie at 29–46 (YIGW…TATS), 118–133 (HFLL…EWEL), and 142–156 (WIAV…AAAA). Residue His118 coordinates chlorophyll a. Residue Tyr126 coordinates pheophytin a. Residues Asp170 and Glu189 each contribute to the [CaMn4O5] cluster site. The helical transmembrane segment at 197–218 (FHMLGVAGVFGGSLFSAMHGSL) threads the bilayer. His198 contributes to the chlorophyll a binding site. A quinone contacts are provided by residues His215 and 264–265 (SF). His215 is a binding site for Fe cation. His272 serves as a coordination point for Fe cation. Residues 274 to 288 (FLAAWPVVGIWFTAL) form a helical membrane-spanning segment. [CaMn4O5] cluster contacts are provided by His332, Glu333, Asp342, and Ala344. Positions 345 to 353 (SVEAPSVKA) are excised as a propeptide.

The protein belongs to the reaction center PufL/M/PsbA/D family. As to quaternary structure, PSII is composed of 1 copy each of membrane proteins PsbA, PsbB, PsbC, PsbD, PsbE, PsbF, PsbH, PsbI, PsbJ, PsbK, PsbL, PsbM, PsbT, PsbX, PsbY, PsbZ, Psb30/Ycf12, at least 3 peripheral proteins of the oxygen-evolving complex and a large number of cofactors. It forms dimeric complexes. Requires The D1/D2 heterodimer binds P680, chlorophylls that are the primary electron donor of PSII, and subsequent electron acceptors. It shares a non-heme iron and each subunit binds pheophytin, quinone, additional chlorophylls, carotenoids and lipids. D1 provides most of the ligands for the Mn4-Ca-O5 cluster of the oxygen-evolving complex (OEC). There is also a Cl(-1) ion associated with D1 and D2, which is required for oxygen evolution. The PSII complex binds additional chlorophylls, carotenoids and specific lipids. as cofactor. Tyr-161 forms a radical intermediate that is referred to as redox-active TyrZ, YZ or Y-Z. In terms of processing, C-terminally processed by CTPA; processing is essential to allow assembly of the oxygen-evolving complex and thus photosynthetic growth.

The protein resides in the plastid. It is found in the chloroplast thylakoid membrane. The enzyme catalyses 2 a plastoquinone + 4 hnu + 2 H2O = 2 a plastoquinol + O2. In terms of biological role, photosystem II (PSII) is a light-driven water:plastoquinone oxidoreductase that uses light energy to abstract electrons from H(2)O, generating O(2) and a proton gradient subsequently used for ATP formation. It consists of a core antenna complex that captures photons, and an electron transfer chain that converts photonic excitation into a charge separation. The D1/D2 (PsbA/PsbD) reaction center heterodimer binds P680, the primary electron donor of PSII as well as several subsequent electron acceptors. The polypeptide is Photosystem II protein D1 (Angiopteris evecta (Mule's foot fern)).